The sequence spans 356 residues: UDP-N-acetylglucosamine--N-acetylmuramyl-(pentapeptide) pyrophosphoryl-undecaprenol N-acetylglucosamine transferase (356 aa).

Residues 12-14 (TGG), Asn-124, Arg-163, Ser-188, Ile-242, 261-266 (ALTVSE), and Gln-287 contribute to the UDP-N-acetyl-alpha-D-glucosamine site.

Belongs to the glycosyltransferase 28 family. MurG subfamily.

The protein localises to the cell inner membrane. It catalyses the reaction di-trans,octa-cis-undecaprenyl diphospho-N-acetyl-alpha-D-muramoyl-L-alanyl-D-glutamyl-meso-2,6-diaminopimeloyl-D-alanyl-D-alanine + UDP-N-acetyl-alpha-D-glucosamine = di-trans,octa-cis-undecaprenyl diphospho-[N-acetyl-alpha-D-glucosaminyl-(1-&gt;4)]-N-acetyl-alpha-D-muramoyl-L-alanyl-D-glutamyl-meso-2,6-diaminopimeloyl-D-alanyl-D-alanine + UDP + H(+). The protein operates within cell wall biogenesis; peptidoglycan biosynthesis. Cell wall formation. Catalyzes the transfer of a GlcNAc subunit on undecaprenyl-pyrophosphoryl-MurNAc-pentapeptide (lipid intermediate I) to form undecaprenyl-pyrophosphoryl-MurNAc-(pentapeptide)GlcNAc (lipid intermediate II). The polypeptide is UDP-N-acetylglucosamine--N-acetylmuramyl-(pentapeptide) pyrophosphoryl-undecaprenol N-acetylglucosamine transferase (Pseudomonas fluorescens (strain ATCC BAA-477 / NRRL B-23932 / Pf-5)).